We begin with the raw amino-acid sequence, 274 residues long: MDVRQSIHSAHAKTLDTQGLHNEFLVEKVFVADEYTMVYSHIDRIIVGGIMPITKTVSVGGEVGKQLGVSYFLERRELGVINIGGAGTITVDGQCYEIGHRDALYVGKGAKEVVFASIDTAIYYNCAPAHTTYPTKKVTPDEVSPVTLGDNLTSNRRTINKYFVPDVLETCQLSMGLTELAPGNLWNTMPCHTHERRMEVYFYFNMDDDACVFHMMGQPQETRHIVMHNEQAVISPSWSIHSGVGTKAYTFIWGMVGENQVFDDMDHVAVKDLR.

Residues H192, H194, E199, and H241 each coordinate Zn(2+).

Belongs to the KduI family. Zn(2+) serves as cofactor.

It catalyses the reaction 5-dehydro-4-deoxy-D-glucuronate = 3-deoxy-D-glycero-2,5-hexodiulosonate. Its pathway is glycan metabolism; pectin degradation; 2-dehydro-3-deoxy-D-gluconate from pectin: step 4/5. In terms of biological role, catalyzes the isomerization of 5-dehydro-4-deoxy-D-glucuronate to 3-deoxy-D-glycero-2,5-hexodiulosonate. This is 4-deoxy-L-threo-5-hexosulose-uronate ketol-isomerase from Shigella boydii serotype 18 (strain CDC 3083-94 / BS512).